The chain runs to 1002 residues: UPF0182 protein alr1037 (1002 aa).

A run of 9 helical transmembrane segments spans residues Phe-7–Glu-29, Arg-49–Ala-71, Leu-123–Gly-145, Gln-178–Ser-200, Phe-202–Ala-224, Leu-258–Leu-280, His-300–Ser-319, Val-339–Leu-361, and Gly-382–Val-404.

It belongs to the UPF0182 family.

It is found in the cell membrane. The polypeptide is UPF0182 protein alr1037 (Nostoc sp. (strain PCC 7120 / SAG 25.82 / UTEX 2576)).